Consider the following 457-residue polypeptide: MRKVSTGFVYFFGALGGLLFGYDTGVISGAILFIQKQMNLGSWQQGWVVSAVLLGAILGAAIIGPSSDRFGRRKLLLLSAIIFFVGALGSAFSPEFWTLIISRIILGMAVGAASALIPTYLAELAPSDKRGTVSSLFQLMVMTGILLAYITNYSFSGFYTGWRWMLGFAAIPAALLFLGGLILPESPRFLVKSGHLDEARHVLDTMNKHDQVAVNKEINDIQESAKIVSGGWSELFGKMVRPSLIIGIGLAIFQQVMGCNTVLYYAPTIFTDVGFGVSAALLAHIGIGIFNVIVTAIAVAIMDKIDRKKIVNIGAVGMGISLFVMSIGMKFSGGSQTAAIISVIALTVYIAFFSATWGPVMWVMIGEVFPLNIRGLGNSFASVINWTANMIVSLTFPSLLDFFGTGSLFIGYGILCFASIWFVQKKVFETRNRSLEDIEATLRAKTGEDAAELSTTK.

10 helical membrane-spanning segments follow: residues 14-34 (ALGG…ILFI), 46-66 (GWVV…IGPS), 81-101 (IIFF…TLII), 104-124 (IILG…LAEL), 131-151 (GTVS…AYIT), 164-184 (WMLG…LILP), 244-264 (LIIG…TVLY), 281-301 (LLAH…AVAI), 309-329 (KIVN…SIGM), and 338-358 (AAII…ATWG). Residue Gln-138 participates in beta-D-xylose binding. Beta-D-xylose contacts are provided by residues 254–255 (QQ) and Asn-260. Trp-362 and Asn-385 together coordinate beta-D-xylose. The next 2 membrane-spanning stretches (helical) occupy residues 380–400 (FASV…PSLL) and 402–422 (FFGT…SIWF).

Belongs to the major facilitator superfamily. Sugar transporter (TC 2.A.1.1) family.

The protein resides in the cell membrane. With respect to regulation, transport is inhibited by 6-deoxy-D-glucose. Uptake of D-xylose across the boundary membrane with the concomitant transport of protons into the cell (symport system). Transport is driven by the proton motive force generated by either malolactic fermentation or by the metabolism of D-glucose. The chain is D-xylose transporter from Levilactobacillus brevis (Lactobacillus brevis).